Reading from the N-terminus, the 341-residue chain is Barley B recombinant-like protein A (341 aa).

Basic residues predominate over residues 48–62; that stretch reads HQHQQHVPHHHHQPH. Disordered stretches follow at residues 48 to 95 and 150 to 234; these read HQHQ…MNFA and MQQQ…RKNI. Over residues 68 to 77 the composition is skewed to low complexity; that stretch reads GANGNANGGA. Residues 78–90 show a composition bias toward pro residues; it reads MPPPPATEAPPSM. The segment covering 190–211 has biased composition (basic residues); sequence PKKRQQGRQPKVPRAKKPKKSA.

Belongs to the BBR/BPC family.

It localises to the nucleus. In terms of biological role, transcriptional regulator that specifically binds to GA-rich elements (GAGA-repeats) present in regulatory sequences of genes involved in developmental processes. The sequence is that of Barley B recombinant-like protein A from Oryza sativa subsp. japonica (Rice).